We begin with the raw amino-acid sequence, 256 residues long: Sugar fermentation stimulation protein homolog (256 aa).

The span at 128-141 shows a compositional bias: low complexity; it reads TGSTDTSFSGTPPT. The tract at residues 128-149 is disordered; sequence TGSTDTSFSGTPPTNTEPANTK.

Belongs to the SfsA family.

The protein is Sugar fermentation stimulation protein homolog of Shewanella sediminis (strain HAW-EB3).